The chain runs to 1394 residues: Cyclic nucleotide-gated channel beta-1 (1394 aa).

3 disordered regions span residues 1 to 95 (MLGW…AHSS), 112 to 253 (VPQP…QDSA), and 271 to 675 (VIRG…SQNS). Over 1–762 (MLGWVQRVLP…WKKYQFPQSI (762 aa)) the chain is Cytoplasmic. 2 stretches are compositionally biased toward polar residues: residues 68–86 (PQGT…QAQV) and 116–125 (AHSSRPSQNI). 2 stretches are compositionally biased toward basic and acidic residues: residues 300–312 (EESH…VDPH) and 336–355 (DEEK…RIQE). Acidic residues predominate over residues 356–387 (EKEDEEEEKEDGEEEEEEGREKEEEEGEEKEE). Residues 388 to 408 (EEGREKEEEEGEKKEEEGREK) are compositionally biased toward basic and acidic residues. Residues 409 to 418 (EEEEGGEKED) show a composition bias toward acidic residues. A compositionally biased stretch (basic and acidic residues) spans 419 to 433 (EEGREKEEEEGRGKE). 2 stretches are compositionally biased toward acidic residues: residues 452 to 464 (EGRE…EEEQ) and 481 to 490 (DRSEESETQD). Low complexity-rich tracts occupy residues 493–508 (EVGG…GAQA) and 529–554 (EVGG…AQDQ). The segment covering 654–675 (DPTSPQGTDDQDRATSTASQNS) has biased composition (polar residues). A calmodulin-binding CaM1 region spans residues 671-681 (ASQNSAIINDR). The short motif at 682–692 (LQELVKLFKER) is the IQ-like element. Positions 699 to 732 (KLIDPDVTSDEESPKPSPAKKAPEPAPEVKPAEA) are disordered. A helical membrane pass occupies residues 763-793 (DPLTNLMYILWLFFVVLAWNWNCWLIPVRWA). The Extracellular portion of the chain corresponds to 794–798 (FPYQT). A helical transmembrane segment spans residues 799 to 825 (PDNIHLWLLMDYLCDLIYLLDITVFQM). Residues 826-837 (RLQFVRGGDIIT) lie on the Cytoplasmic side of the membrane. Residues 838-861 (DKKEMRNNYVKSQRFKMDMLCLLP) traverse the membrane as a helical segment. Over 862-872 (LDLLYLKFGVN) the chain is Extracellular. A helical membrane pass occupies residues 873-887 (PLLRLPRCLKYMAFF). At 888–900 (EFNNRLESILSKA) the chain is on the cytoplasmic side. Residues 900–999 (AYVYRVIRTT…IGQMRDVVGA (100 aa)) are ion conduction pathway. A helical transmembrane segment spans residues 901–922 (YVYRVIRTTAYLLYSLHLNSCL). The Extracellular segment spans residues 923–931 (YYWASAYEG). A run of 2 helical transmembrane segments spans residues 932–974 (LGST…EIVF) and 975–1002 (QGLN…AATA). The segment at 959–962 (TIGG) is selectivity filter. Residues 1003-1394 (GQTYYRSCMD…EEARKEKEEE (392 aa)) lie on the Cytoplasmic side of the membrane. Residues 1082 to 1198 (RQMIFDMLKR…LLRKKARRML (117 aa)) form a cyclic nucleotide-binding domain region. The 3',5'-cyclic GMP site is built by glycine 1143, glutamate 1144, serine 1146, arginine 1156, and threonine 1157. Residue arginine 1156 coordinates 3',5'-cyclic AMP. The segment at 1261 to 1267 (QQQLLEQ) is calmodulin-binding CaM2. A disordered region spans residues 1265–1394 (LEQAKSSEDA…EEARKEKEEE (130 aa)). Residues 1285–1326 (EQPPRPEPPAPEAPAPEPTAPEPLAPEAPAPEAPAPSSPPPA) show a composition bias toward pro residues. Basic and acidic residues-rich tracts occupy residues 1329 to 1345 (ERPE…EHPV) and 1364 to 1376 (VPEK…KKEE).

Belongs to the cyclic nucleotide-gated cation channel (TC 1.A.1.5) family. CNGB1 subfamily. In terms of assembly, the rod cyclic nucleotide-gated channel is a heterotetramer composed of CNGA1 and CNGB1 subunits with 3:1 stoichiometry. CNGA1:CNGB1 channel binds Ca(2+)-bound CALM1 via CaM1 and CaM2 regions of the CNGB1 subunit; this interaction modulates the affinity of the channel for cNMPs in response to intracellular Ca(2+) levels. The olfactory cyclic nucleotide-gated channel is a heterotetramer composed of CNGA2, CNGA4 and CNGB1 subunits with 2:1:1 stoichiometry. Retina, testis, kidney, heart and brain.

It is found in the membrane. The enzyme catalyses Ca(2+)(in) = Ca(2+)(out). The catalysed reaction is Na(+)(in) = Na(+)(out). It catalyses the reaction K(+)(in) = K(+)(out). It carries out the reaction NH4(+)(in) = NH4(+)(out). The enzyme catalyses Rb(+)(in) = Rb(+)(out). The catalysed reaction is Li(+)(in) = Li(+)(out). It catalyses the reaction Cs(+)(in) = Cs(+)(out). Functionally, pore-forming subunit of the rod cyclic nucleotide-gated channel. Mediates rod photoresponses at dim light converting transient changes in intracellular cGMP levels into electrical signals. In the dark, cGMP levels are high and keep the channel open enabling a steady inward current carried by Na(+) and Ca(2+) ions that leads to membrane depolarization and neurotransmitter release from synaptic terminals. Upon photon absorption cGMP levels decline leading to channel closure and membrane hyperpolarization that ultimately slows neurotransmitter release and signals the presence of light, the end point of the phototransduction cascade. Pore-forming subunit of the olfactory cyclic nucleotide-gated channel. Operates in the cilia of olfactory sensory neurons where chemical stimulation of the odorant is converted to an electrical signal. Mediates odorant-induced cAMP-dependent Ca(2+) influx triggering neuron depolarization. The rise of intracellular Ca(2+) levels potentiates the olfactory response by activating Ca(2+)-dependent Cl(-) channels, but it also serves as a negative feedback signal to desensitize the channel for rapid adaptation to odorants. Conducts cGMP- and cAMP-gated ion currents, with permeability for monovalent and divalent cations. The selectivity for Ca(2+) over Na(+) increases with cGMP concentrations, whereas the selectivity among monovalent ions is independent of the cGMP levels. This is Cyclic nucleotide-gated channel beta-1 from Bos taurus (Bovine).